We begin with the raw amino-acid sequence, 234 residues long: Uridylate kinase (234 aa).

9–12 (KLSG) contributes to the ATP binding site. A UMP-binding site is contributed by Gly51. ATP is bound by residues Gly52 and Arg56. UMP-binding positions include Asp71 and 132-139 (CGNPFFTT). ATP-binding residues include Thr159, Tyr165, and Asp168.

The protein belongs to the UMP kinase family. Homohexamer.

Its subcellular location is the cytoplasm. It carries out the reaction UMP + ATP = UDP + ADP. The protein operates within pyrimidine metabolism; CTP biosynthesis via de novo pathway; UDP from UMP (UMPK route): step 1/1. With respect to regulation, inhibited by UTP. In terms of biological role, catalyzes the reversible phosphorylation of UMP to UDP. The chain is Uridylate kinase from Prochlorococcus marinus (strain MIT 9312).